The chain runs to 248 residues: MSEAAQTLDGWYCLHDFRTIDWSAWKTLPNEEREAAISEFLALVDQWETTESEKQGSHAVYTIVGQKADILFMILRPTLDELHEIETALNKTKLADYLLPAYSYVSVVELSNYLASGSEDPYQIPEVRRRLYPILPKTNYICFYPMDKRRQGNDNWYMLSMEQRRELMRAHGMTGRKYAGKVTQIITGSVGLDDFEWGVTLFSDDALQFKKLVYEMRFDEVSARFGEFGSFFVGTRLSVEKVPSFFHV.

Residues Arg130, 144–148 (YPMDK), His171, Gln184, and Ser222 each bind Fe-coproporphyrin III. The active site involves Tyr144.

Belongs to the ChdC family. Type 1 subfamily. In terms of assembly, homopentamer. The cofactor is Fe-coproporphyrin III.

The enzyme catalyses Fe-coproporphyrin III + 2 H2O2 + 2 H(+) = heme b + 2 CO2 + 4 H2O. It catalyses the reaction Fe-coproporphyrin III + H2O2 + H(+) = harderoheme III + CO2 + 2 H2O. It carries out the reaction harderoheme III + H2O2 + H(+) = heme b + CO2 + 2 H2O. It participates in porphyrin-containing compound metabolism; protoheme biosynthesis. Involved in coproporphyrin-dependent heme b biosynthesis. Catalyzes the decarboxylation of Fe-coproporphyrin III (coproheme) to heme b (protoheme IX), the last step of the pathway. The reaction occurs in a stepwise manner with a three-propionate intermediate. This is Coproheme decarboxylase from Geobacillus kaustophilus (strain HTA426).